The following is a 377-amino-acid chain: Nitric oxide reductase FlRd-NAD(+) reductase (377 aa).

This sequence belongs to the FAD-dependent oxidoreductase family. The cofactor is FAD.

It localises to the cytoplasm. The enzyme catalyses 2 reduced [nitric oxide reductase rubredoxin domain] + NAD(+) + H(+) = 2 oxidized [nitric oxide reductase rubredoxin domain] + NADH. It participates in nitrogen metabolism; nitric oxide reduction. Functionally, one of at least two accessory proteins for anaerobic nitric oxide (NO) reductase. Reduces the rubredoxin moiety of NO reductase. This Shigella sonnei (strain Ss046) protein is Nitric oxide reductase FlRd-NAD(+) reductase.